The chain runs to 322 residues: Pantothenate kinase (322 aa).

104–111 (GSVAVGKS) is an ATP binding site.

Belongs to the prokaryotic pantothenate kinase family.

Its subcellular location is the cytoplasm. It carries out the reaction (R)-pantothenate + ATP = (R)-4'-phosphopantothenate + ADP + H(+). Its pathway is cofactor biosynthesis; coenzyme A biosynthesis; CoA from (R)-pantothenate: step 1/5. In Leifsonia xyli subsp. xyli (strain CTCB07), this protein is Pantothenate kinase.